The sequence spans 240 residues: 2,3,4,5-tetrahydropyridine-2,6-dicarboxylate N-acetyltransferase (240 aa).

It belongs to the transferase hexapeptide repeat family. DapH subfamily.

The enzyme catalyses (S)-2,3,4,5-tetrahydrodipicolinate + acetyl-CoA + H2O = L-2-acetamido-6-oxoheptanedioate + CoA. Its pathway is amino-acid biosynthesis; L-lysine biosynthesis via DAP pathway; LL-2,6-diaminopimelate from (S)-tetrahydrodipicolinate (acetylase route): step 1/3. In terms of biological role, catalyzes the transfer of an acetyl group from acetyl-CoA to tetrahydrodipicolinate. This Bacillus thuringiensis (strain Al Hakam) protein is 2,3,4,5-tetrahydropyridine-2,6-dicarboxylate N-acetyltransferase.